The following is a 682-amino-acid chain: Actin-binding LIM protein 3 (682 aa).

An N-acetylmethionine modification is found at M1. LIM zinc-binding domains lie at 21–80 (IQCY…LYGT), 80–140 (TRCD…MTSS), 149–208 (SHCA…QFGI), and 208–268 (IKCE…ARAE). Phosphoserine is present on residues S277, S280, S282, S286, S290, S337, S372, and S373. Disordered regions lie at residues 372–426 (SSPG…SYQA) and 440–475 (YRKPPIYKRHGDLSTATKSKTSEDISQASKYSPAYS). The residue at position 376 (Y376) is a Phosphotyrosine. Phosphoserine occurs at positions 379 and 388. Composition is skewed to polar residues over residues 380-393 (PTYSRQGMSPTFSR), 405-425 (GRSSPYHSQLDVRSSTPTSYQ), and 453-466 (STATKSKTSEDISQ). A phosphoserine mark is found at S492, S502, and S503. T542 is subject to Phosphothreonine. Phosphoserine occurs at positions 566, 575, and 606. Residues 614 to 682 (MREYKIYPYE…NELKKQARLF (69 aa)) form the HP domain. R630 is modified (omega-N-methylarginine).

Directly interacts with F-actin and ABRA. Expressed in heart, brain, lung and liver. In the brain, highly expressed in the olfactory bulb. In the hippocampus, expressed selectively in the CA2 and CA3 fields. In the cerebellum, expressed in internal granular cells.

It localises to the cytoplasm. Functionally, may act as scaffold protein. May stimulate ABRA activity and ABRA-dependent SRF transcriptional activity. The chain is Actin-binding LIM protein 3 (Ablim3) from Mus musculus (Mouse).